A 211-amino-acid polypeptide reads, in one-letter code: Endonuclease III (211 aa).

One can recognise a HhH domain in the interval 108–127 (RAALEALPGVGRKTANVVLN). Residues C187, C194, C197, and C203 each contribute to the [4Fe-4S] cluster site.

This sequence belongs to the Nth/MutY family. Requires [4Fe-4S] cluster as cofactor.

It catalyses the reaction 2'-deoxyribonucleotide-(2'-deoxyribose 5'-phosphate)-2'-deoxyribonucleotide-DNA = a 3'-end 2'-deoxyribonucleotide-(2,3-dehydro-2,3-deoxyribose 5'-phosphate)-DNA + a 5'-end 5'-phospho-2'-deoxyribonucleoside-DNA + H(+). In terms of biological role, DNA repair enzyme that has both DNA N-glycosylase activity and AP-lyase activity. The DNA N-glycosylase activity releases various damaged pyrimidines from DNA by cleaving the N-glycosidic bond, leaving an AP (apurinic/apyrimidinic) site. The AP-lyase activity cleaves the phosphodiester bond 3' to the AP site by a beta-elimination, leaving a 3'-terminal unsaturated sugar and a product with a terminal 5'-phosphate. This Escherichia coli O6:H1 (strain CFT073 / ATCC 700928 / UPEC) protein is Endonuclease III.